A 132-amino-acid polypeptide reads, in one-letter code: Small ribosomal subunit protein uS8 (132 aa).

It belongs to the universal ribosomal protein uS8 family. As to quaternary structure, part of the 30S ribosomal subunit. Contacts proteins S5 and S12.

In terms of biological role, one of the primary rRNA binding proteins, it binds directly to 16S rRNA central domain where it helps coordinate assembly of the platform of the 30S subunit. The sequence is that of Small ribosomal subunit protein uS8 from Clostridium botulinum (strain Alaska E43 / Type E3).